The following is a 512-amino-acid chain: ATP synthase subunit alpha 2 (512 aa).

169-176 lines the ATP pocket; sequence GDRQTGKT.

It belongs to the ATPase alpha/beta chains family. As to quaternary structure, F-type ATPases have 2 components, CF(1) - the catalytic core - and CF(0) - the membrane proton channel. CF(1) has five subunits: alpha(3), beta(3), gamma(1), delta(1), epsilon(1). CF(0) has four main subunits: a(1), b(1), b'(1) and c(9-12).

It is found in the cell inner membrane. The catalysed reaction is ATP + H2O + 4 H(+)(in) = ADP + phosphate + 5 H(+)(out). Its function is as follows. Produces ATP from ADP in the presence of a proton gradient across the membrane. The alpha chain is a regulatory subunit. The protein is ATP synthase subunit alpha 2 of Dinoroseobacter shibae (strain DSM 16493 / NCIMB 14021 / DFL 12).